Consider the following 418-residue polypeptide: Glutamyl-tRNA reductase (418 aa).

Residues threonine 49 to arginine 52, serine 109, glutamate 114 to glutamine 116, and glutamine 120 each bind substrate. Cysteine 50 serves as the catalytic Nucleophile. An NADP(+)-binding site is contributed by glycine 189–isoleucine 194.

The protein belongs to the glutamyl-tRNA reductase family. In terms of assembly, homodimer.

It carries out the reaction (S)-4-amino-5-oxopentanoate + tRNA(Glu) + NADP(+) = L-glutamyl-tRNA(Glu) + NADPH + H(+). It participates in porphyrin-containing compound metabolism; protoporphyrin-IX biosynthesis; 5-aminolevulinate from L-glutamyl-tRNA(Glu): step 1/2. Catalyzes the NADPH-dependent reduction of glutamyl-tRNA(Glu) to glutamate 1-semialdehyde (GSA). The polypeptide is Glutamyl-tRNA reductase (Shigella flexneri).